Reading from the N-terminus, the 122-residue chain is Large ribosomal subunit protein uL14 (122 aa).

The protein belongs to the universal ribosomal protein uL14 family. In terms of assembly, part of the 50S ribosomal subunit. Forms a cluster with proteins L3 and L19. In the 70S ribosome, L14 and L19 interact and together make contacts with the 16S rRNA in bridges B5 and B8.

In terms of biological role, binds to 23S rRNA. Forms part of two intersubunit bridges in the 70S ribosome. The sequence is that of Large ribosomal subunit protein uL14 from Cytophaga hutchinsonii (strain ATCC 33406 / DSM 1761 / CIP 103989 / NBRC 15051 / NCIMB 9469 / D465).